The primary structure comprises 512 residues: 2,3-bisphosphoglycerate-independent phosphoglycerate mutase (512 aa).

Residues aspartate 12 and serine 62 each coordinate Mn(2+). Serine 62 serves as the catalytic Phosphoserine intermediate. Substrate is bound by residues histidine 123, 153–154 (RD), arginine 185, arginine 191, 260–263 (RPDR), and lysine 333. Residues aspartate 400, histidine 404, aspartate 441, histidine 442, and histidine 460 each coordinate Mn(2+).

The protein belongs to the BPG-independent phosphoglycerate mutase family. As to quaternary structure, monomer. Mn(2+) is required as a cofactor.

It carries out the reaction (2R)-2-phosphoglycerate = (2R)-3-phosphoglycerate. The protein operates within carbohydrate degradation; glycolysis; pyruvate from D-glyceraldehyde 3-phosphate: step 3/5. Functionally, catalyzes the interconversion of 2-phosphoglycerate and 3-phosphoglycerate. The chain is 2,3-bisphosphoglycerate-independent phosphoglycerate mutase from Clostridium perfringens (strain SM101 / Type A).